Reading from the N-terminus, the 162-residue chain is 2-C-methyl-D-erythritol 2,4-cyclodiphosphate synthase (162 aa).

A divalent metal cation contacts are provided by Asp8 and His10. Residues 8–10 (DVH) and 36–37 (HS) each bind 4-CDP-2-C-methyl-D-erythritol 2-phosphate. His44 contacts a divalent metal cation. Residues 58 to 60 (DIG), 63 to 67 (FPDTD), 102 to 108 (AQAPKMA), 134 to 137 (TTTE), Phe141, and Arg144 contribute to the 4-CDP-2-C-methyl-D-erythritol 2-phosphate site.

The protein belongs to the IspF family. Homotrimer. The cofactor is a divalent metal cation.

It carries out the reaction 4-CDP-2-C-methyl-D-erythritol 2-phosphate = 2-C-methyl-D-erythritol 2,4-cyclic diphosphate + CMP. The protein operates within isoprenoid biosynthesis; isopentenyl diphosphate biosynthesis via DXP pathway; isopentenyl diphosphate from 1-deoxy-D-xylulose 5-phosphate: step 4/6. Involved in the biosynthesis of isopentenyl diphosphate (IPP) and dimethylallyl diphosphate (DMAPP), two major building blocks of isoprenoid compounds. Catalyzes the conversion of 4-diphosphocytidyl-2-C-methyl-D-erythritol 2-phosphate (CDP-ME2P) to 2-C-methyl-D-erythritol 2,4-cyclodiphosphate (ME-CPP) with a corresponding release of cytidine 5-monophosphate (CMP). The sequence is that of 2-C-methyl-D-erythritol 2,4-cyclodiphosphate synthase from Yersinia pseudotuberculosis serotype O:1b (strain IP 31758).